Consider the following 403-residue polypeptide: S-adenosylmethionine synthase (403 aa).

ATP is bound at residue histidine 17. Position 19 (aspartate 19) interacts with Mg(2+). Glutamate 45 contributes to the K(+) binding site. The L-methionine site is built by glutamate 58 and glutamine 104. The flexible loop stretch occupies residues glutamine 104–threonine 114. ATP is bound by residues aspartate 179–lysine 181, lysine 250–phenylalanine 251, aspartate 259, arginine 265–lysine 266, alanine 282, and lysine 286. L-methionine is bound at residue aspartate 259. An L-methionine-binding site is contributed by lysine 290.

Belongs to the AdoMet synthase family. Homotetramer; dimer of dimers. The cofactor is Mg(2+). K(+) is required as a cofactor.

Its subcellular location is the cytoplasm. It catalyses the reaction L-methionine + ATP + H2O = S-adenosyl-L-methionine + phosphate + diphosphate. The protein operates within amino-acid biosynthesis; S-adenosyl-L-methionine biosynthesis; S-adenosyl-L-methionine from L-methionine: step 1/1. In terms of biological role, catalyzes the formation of S-adenosylmethionine (AdoMet) from methionine and ATP. The overall synthetic reaction is composed of two sequential steps, AdoMet formation and the subsequent tripolyphosphate hydrolysis which occurs prior to release of AdoMet from the enzyme. The polypeptide is S-adenosylmethionine synthase (Mycobacterium leprae (strain Br4923)).